We begin with the raw amino-acid sequence, 479 residues long: T-box transcription factor TBX1 (479 aa).

2 stretches are compositionally biased toward low complexity: residues 15-31 (ASSLSGLGSPSPGADPF) and 59-86 (YPFAPAPGAAGSSAAESEGPGASRAAAV). The segment at 15 to 86 (ASSLSGLGSP…GPGASRAAAV (72 aa)) is disordered. The T-box DNA-binding region spans 108–286 (LWDEFNQLGT…SNPFAKGFRD (179 aa)). The tract at residues 311-398 (RNPVASPTQP…APGASEPLHH (88 aa)) is disordered. The segment covering 313-322 (PVASPTQPNG) has biased composition (polar residues). The span at 323–338 (SDKDAAEARREFDRDS) shows a compositional bias: basic and acidic residues. Residues 415-426 (KSRPAPYPLPGL) carry the Nuclear localization signal motif.

In terms of assembly, binds DNA as a dimer. Interacts with DSCR6. Interacts with NKX2-5. In terms of tissue distribution, expressed in skeletal muscle, lung and testis. Highly expressed in hair follicle stem cell, but not in terminally differentiating cells.

Its subcellular location is the nucleus. Its function is as follows. Transcription factor that plays a key role in cardiovascular development by promoting pharyngeal arch segmentation during embryonic development. Also involved in craniofacial muscle development. Together with NKX2-5, acts as a regulator of asymmetric cardiac morphogenesis by promoting expression of PITX2. Acts upstream of TBX1 for the formation of the thymus and parathyroid glands from the third pharyngeal pouch. Required for hair follicle stem cell self-renewal. Binds to the palindromic T site 5'-TTCACACCTAGGTGTGAA-3' DNA sequence. The sequence is that of T-box transcription factor TBX1 from Mus musculus (Mouse).